We begin with the raw amino-acid sequence, 341 residues long: L-sulfolactate dehydrogenase (341 aa).

This sequence belongs to the LDH2/MDH2 oxidoreductase family.

The protein resides in the cytoplasm. The enzyme catalyses a (2S)-2-hydroxycarboxylate + NAD(+) = a 2-oxocarboxylate + NADH + H(+). The protein operates within cofactor biosynthesis; coenzyme M biosynthesis; sulfoacetaldehyde from phosphoenolpyruvate and sulfite: step 3/4. It participates in cofactor biosynthesis; 5,6,7,8-tetrahydromethanopterin biosynthesis. Functionally, catalyzes the reduction of sulfopyruvate to (R)-sulfolactate. Involved in the biosynthesis of both coenzyme M (with (R)-sulfolactate) and methanopterin (with alpha-ketoglutarate). This chain is L-sulfolactate dehydrogenase (comC), found in Methanothermobacter thermautotrophicus (strain ATCC 29096 / DSM 1053 / JCM 10044 / NBRC 100330 / Delta H) (Methanobacterium thermoautotrophicum).